The primary structure comprises 133 residues: Cell division protein FtsL (133 aa).

The Cytoplasmic portion of the chain corresponds to 1-45; that stretch reads MAVEKVYQPYDEQVYNSIPKQQPQTKPEKKTVSRKVVVQLTKFEK. A helical membrane pass occupies residues 46–65; it reads VLYITLITVIAMLSIYMLSL. The Extracellular portion of the chain corresponds to 66–133; that stretch reads KMDAYDTRGK…VVRSNGEAKN (68 aa).

It belongs to the FtsL family.

The protein localises to the cell membrane. Essential cell division protein. The protein is Cell division protein FtsL of Staphylococcus aureus (strain NCTC 8325 / PS 47).